The primary structure comprises 618 residues: ELMO domain-containing protein C (618 aa).

Residues 1–72 (MERYRIRRER…EELRLQGDRF (72 aa)) are a coiled coil. 2 disordered regions span residues 153 to 175 (NFDN…KPSL) and 245 to 276 (TTTT…STTV). Composition is skewed to low complexity over residues 156–171 (NNNN…NNGN) and 245–275 (TTTT…SSTT). The 164-residue stretch at 382–545 (DHEEYLKHLW…KLKSQLNEIS (164 aa)) folds into the ELMO domain. Composition is skewed to low complexity over residues 574–592 (QQQQ…PSSP) and 602–618 (TTTS…TQNN). A disordered region spans residues 574–618 (QQQQQLQQQQQSLPLPSSPRSFLNNYQQTTTSSTSISPSKNTQNN).

The sequence is that of ELMO domain-containing protein C (elmoC) from Dictyostelium discoideum (Social amoeba).